Here is a 326-residue protein sequence, read N- to C-terminus: Aldo-keto reductase family 1 member D1 (326 aa).

Residues 22–26 (GLGTY) and Asp-53 each bind NADP(+). Position 26 (Tyr-26) interacts with substrate. Positions 58, 89, 120, and 132 each coordinate substrate. The active-site Proton donor is the Tyr-58. Residues 169 to 170 (SN), Gln-193, and 219 to 224 (YSPLGT) contribute to the NADP(+) site. Trp-230 provides a ligand contact to substrate. 273–283 (KSFNPERIKEN) serves as a coordination point for NADP(+).

This sequence belongs to the aldo/keto reductase family.

The protein localises to the cytoplasm. The catalysed reaction is 5beta-cholestan-3-one + NADP(+) = cholest-4-en-3-one + NADPH + H(+). It catalyses the reaction 4,5beta-dihydrocortisone + NADP(+) = cortisone + NADPH + H(+). It carries out the reaction cortisol + NADPH + H(+) = 5beta-dihydrocortisol + NADP(+). The enzyme catalyses corticosterone + NADPH + H(+) = 5beta-dihydrocorticosterone + NADP(+). The catalysed reaction is 7alpha,12alpha-dihydroxycholest-4-en-3-one + NADPH + H(+) = 7alpha,12alpha-dihydroxy-5beta-cholestan-3-one + NADP(+). It catalyses the reaction 7alpha-hydroxycholest-4-en-3-one + NADPH + H(+) = 7alpha-hydroxy-5beta-cholestan-3-one + NADP(+). It carries out the reaction epitestosterone + NADPH + H(+) = 5beta-dihydroepitestosterone + NADP(+). The enzyme catalyses androst-4-ene-3,17-dione + NADPH + H(+) = 5beta-androstane-3,17-dione + NADP(+). The catalysed reaction is progesterone + NADPH + H(+) = 5beta-pregnan-3,20-dione + NADP(+). It catalyses the reaction 21-hydroxyprogesterone + NADPH + H(+) = 5beta-dihydrodeoxycorticosterone + NADP(+). It carries out the reaction aldosterone + NADPH + H(+) = 5beta-dihydroaldosterone + NADP(+). The enzyme catalyses 17beta-hydroxyandrosta-1,4-dien-3-one + NADPH + H(+) = 17beta-hydroxy-5beta-androst-1-en-3-one + NADP(+). The catalysed reaction is 17beta-hydroxyestr-4-en-3-one + NADPH + H(+) = 17beta-hydroxy-5beta-estran-3-one + NADP(+). It catalyses the reaction 5beta-dihydrotestosterone + NADP(+) = testosterone + NADPH + H(+). It carries out the reaction androst-4-ene-3,11,17-trione + NADPH + H(+) = 17beta-hydroxyandrost-4-ene-3,11-dione + NADP(+). Its activity is regulated as follows. Subject to inhibition by high substrate concentrations. Inhibited by testosterone concentrations above 10 uM. Inhibited by the primary and secondary bile acids chenodeoxycholic acid and ursodeoxycholic acid. Its function is as follows. Catalyzes the stereospecific NADPH-dependent reduction of the C4-C5 double bond of bile acid intermediates and steroid hormones carrying a delta(4)-3-one structure to yield an A/B cis-ring junction. This cis-configuration is crucial for bile acid biosynthesis and plays important roles in steroid metabolism. Capable of reducing a broad range of delta-(4)-3-ketosteroids from C18 (such as, 17beta-hydroxyestr-4-en-3-one) to C27 (such as, 7alpha-hydroxycholest-4-en-3-one). This Oryctolagus cuniculus (Rabbit) protein is Aldo-keto reductase family 1 member D1 (AKR1D1).